The sequence spans 1910 residues: A disintegrin and metalloproteinase with thrombospondin motifs 20 (1910 aa).

Positions 1–21 (MWVAKWLTGLLYHLSLFITRS) are cleaved as a signal peptide. Positions 22–253 (WEVDFHPRQE…DERRHSRKKR (232 aa)) are excised as a propeptide. 2 N-linked (GlcNAc...) asparagine glycosylation sites follow: asparagine 92 and asparagine 191. Residues 259–467 (RYIEIMVTAD…GYGECLLDKP (209 aa)) form the Peptidase M12B domain. Disulfide bonds link cysteine 334-cysteine 387, cysteine 363-cysteine 369, cysteine 381-cysteine 462, cysteine 419-cysteine 446, cysteine 489-cysteine 511, cysteine 500-cysteine 521, cysteine 506-cysteine 540, cysteine 534-cysteine 545, cysteine 568-cysteine 605, cysteine 572-cysteine 610, and cysteine 583-cysteine 595. Histidine 403 serves as a coordination point for Zn(2+). Glutamate 404 is an active-site residue. Positions 407 and 413 each coordinate Zn(2+). Asparagine 445 carries an N-linked (GlcNAc...) asparagine glycan. The region spanning 468 to 555 (DEEIYNLPSE…VNKETETRPV (88 aa)) is the Disintegrin domain. A TSP type-1 1 domain is found at 556-611 (NGEWGPWEPYSSCSRTCGGGIESATRRCNRPEPRNGGNYCVGRRMKFRSCNTDSCP). 5 N-linked (GlcNAc...) asparagine glycosylation sites follow: asparagine 702, asparagine 717, asparagine 728, asparagine 809, and asparagine 870. A spacer region spans residues 724–846 (TGVFNSSHYG…FNIPLEERSD (123 aa)). TSP type-1 domains lie at 846-904 (DMFT…NTDC), 905-961 (ELRW…QELC), 966-1023 (VFTR…FSCP), 1024-1073 (SWAA…SPCE), 1076-1135 (TCAS…TPCS), 1152-1206 (KMAQ…DCFT), 1207-1264 (PCGE…AACP), 1304-1356 (RGNQ…QCGP), 1358-1416 (PCPQ…HACP), 1417-1475 (ADVS…VRCP), 1476-1531 (SWKA…QDCV), 1535-1588 (GMER…NPPC), 1589-1652 (NYIV…INSC), and 1654-1710 (HLAT…NDCK). N-linked (GlcNAc...) asparagine glycosylation occurs at asparagine 1061. The N-linked (GlcNAc...) asparagine glycan is linked to asparagine 1456. N-linked (GlcNAc...) asparagine glycans are attached at residues asparagine 1542 and asparagine 1572. One can recognise a GON domain in the interval 1711-1910 (SFTTCKEIQV…MTTGLPIQVI (200 aa)). 3 N-linked (GlcNAc...) asparagine glycosylation sites follow: asparagine 1763, asparagine 1781, and asparagine 1852.

Requires Zn(2+) as cofactor. Post-translationally, the precursor is cleaved by a furin endopeptidase. Glycosylated. Can be O-fucosylated by POFUT2 on a serine or a threonine residue found within the consensus sequence C1-X(2)-(S/T)-C2-G of the TSP type-1 repeat domains where C1 and C2 are the first and second cysteine residue of the repeat, respectively. Fucosylated repeats can then be further glycosylated by the addition of a beta-1,3-glucose residue by the glucosyltransferase, B3GALTL. Fucosylation mediates the efficient secretion of ADAMTS family members. Can also be C-glycosylated with one or two mannose molecules on tryptophan residues within the consensus sequence W-X-X-W of the TPRs, and N-glycosylated. These other glycosylations can also facilitate secretion. In terms of tissue distribution, very sparingly expressed, although is detected at low levels in testis, prostate, ovary, heart, placenta, lung and pancreas. Overexpressed in several brain, colon and breast carcinomas.

The protein localises to the secreted. It is found in the extracellular space. It localises to the extracellular matrix. Its function is as follows. May play a role in tissue-remodeling process occurring in both normal and pathological conditions. May have a protease-independent function in the transport from the endoplasmic reticulum to the Golgi apparatus of secretory cargos, mediated by the GON domain. In Homo sapiens (Human), this protein is A disintegrin and metalloproteinase with thrombospondin motifs 20 (ADAMTS20).